We begin with the raw amino-acid sequence, 226 residues long: NADH-ubiquinone oxidoreductase chain 6 (226 aa).

The next 5 membrane-spanning stretches (helical) occupy residues 2–22, 28–48, 56–76, 90–110, and 169–189; these read STLGLLIMLLGIIIMCTLVIL, IYSILNLIVIYGCYASILLTV, IYILVNVGAIAVLFLFIVMMI, YNIYMIVGIIGVVGLLGILIT, and IWFIMACIILLIGMVGVIYIT.

The protein belongs to the complex I subunit 6 family.

The protein resides in the mitochondrion membrane. It catalyses the reaction a ubiquinone + NADH + 5 H(+)(in) = a ubiquinol + NAD(+) + 4 H(+)(out). Functionally, core subunit of the mitochondrial membrane respiratory chain NADH dehydrogenase (Complex I) that is believed to belong to the minimal assembly required for catalysis. Complex I functions in the transfer of electrons from NADH to the respiratory chain. The immediate electron acceptor for the enzyme is believed to be ubiquinone. This is NADH-ubiquinone oxidoreductase chain 6 (nad6) from Dictyostelium discoideum (Social amoeba).